The primary structure comprises 461 residues: MASEQNSPDALLSIRSSCNRCRNHKLKCVVTEAPNGTACCQRCIRAMVPCKFGRRERKKRGSSPRVVPQSPWMHSPWETTSTSMQSIYPNTEAMDVGRADALVVHGTNAFPPPANVPAEQSLTGDHSAILTPGSMNMGIFNHLSLDANNLEADDIHAYKFPHGQLHEAHHTQYWHFQADEWRMDHPNDDSHSDYSATSSSKAATAALLQLAADLQERLDALENEPSWRRKNASMDKYPIGSVLQLSSKLQQLGRCLQTDDSSSTQSESSRSRASVGATSSVHRLQMPVLESGTSDACLNVSHLTSTTRFDTSVSLMLLSCFVTLLQISTGVLGHFQDYLHAHPKTRARTLSMSAAQSSIVSLGDLDPQQQTHDRIHTAIYVLLNSLEEVEEALCLPPRVRLAITLQASPRSDGSTSEQEKAMSAAFYGGLSAATEGIDDILTEFGRRVNDTKGMLRQHMDL.

The segment at residues 18 to 50 (CNRCRNHKLKCVVTEAPNGTACCQRCIRAMVPC) is a DNA-binding region (zn(2)-C6 fungal-type). Disordered regions lie at residues 55–79 (RERKKRGSSPRVVPQSPWMHSPWET) and 256–278 (LQTDDSSSTQSESSRSRASVGAT). Positions 256 to 274 (LQTDDSSSTQSESSRSRAS) are enriched in low complexity.

The protein resides in the nucleus. In terms of biological role, transcription factor that regulates the expression of the gene cluster that mediates the biosynthesis of the trans-fused decalin-containing tetramic acid phomasetin. The sequence is that of Transcription factor phm6 from Pyrenochaetopsis sp.